Consider the following 352-residue polypeptide: Phosphatidylglycerol--prolipoprotein diacylglyceryl transferase (352 aa).

4 helical membrane passes run 20–40 (WYGL…TWLA), 55–75 (FITY…VLFY), 97–117 (EGGM…LLYA), and 122–142 (VNSL…VFFG). An a 1,2-diacyl-sn-glycero-3-phospho-(1'-sn-glycerol)-binding site is contributed by arginine 143. A run of 3 helical transmembrane segments spans residues 248-268 (SQLF…FFLW), 275-295 (GFIA…DEHF), and 314-334 (WLSL…TRAA).

This sequence belongs to the Lgt family.

It is found in the cell inner membrane. It carries out the reaction L-cysteinyl-[prolipoprotein] + a 1,2-diacyl-sn-glycero-3-phospho-(1'-sn-glycerol) = an S-1,2-diacyl-sn-glyceryl-L-cysteinyl-[prolipoprotein] + sn-glycerol 1-phosphate + H(+). It participates in protein modification; lipoprotein biosynthesis (diacylglyceryl transfer). Its function is as follows. Catalyzes the transfer of the diacylglyceryl group from phosphatidylglycerol to the sulfhydryl group of the N-terminal cysteine of a prolipoprotein, the first step in the formation of mature lipoproteins. In Bdellovibrio bacteriovorus (strain ATCC 15356 / DSM 50701 / NCIMB 9529 / HD100), this protein is Phosphatidylglycerol--prolipoprotein diacylglyceryl transferase.